We begin with the raw amino-acid sequence, 426 residues long: 5-hydroxybenzimidazole synthase BzaB (426 aa).

Residues methionine 95, tyrosine 124, histidine 163, 185–187 (SRG), 226–229 (DAIR), and glutamate 265 contribute to the substrate site. Histidine 269 contacts Zn(2+). Residue phenylalanine 292 participates in substrate binding. Histidine 333 serves as a coordination point for Zn(2+). Residues cysteine 407, cysteine 410, and cysteine 414 each coordinate [4Fe-4S] cluster.

The protein belongs to the ThiC family. 5-hydroxybenzimidazole synthase subfamily. [4Fe-4S] cluster serves as cofactor.

The catalysed reaction is 5-amino-1-(5-phospho-beta-D-ribosyl)imidazole + AH2 + S-adenosyl-L-methionine = 5-hydroxybenzimidazole + 5'-deoxyadenosine + formate + L-methionine + A + NH4(+) + phosphate + 2 H(+). Together with BzaA, probably catalyzes the conversion of aminoimidazole ribotide (AIR) to 5-hydroxybenzimidazole (5-HBI) in a radical S-adenosyl-L-methionine (SAM)-dependent reaction. Is thus involved in the anaerobic biosynthesis of the benzimidazole lower axial ligand of the cobamide produced by M.thermoacetica. Requires BzaA for catalytic activity, as BzaB alone displays no activity. The polypeptide is 5-hydroxybenzimidazole synthase BzaB (Moorella thermoacetica (strain ATCC 39073 / JCM 9320)).